Consider the following 401-residue polypeptide: Chalcone synthase 3 (401 aa).

The active site involves Cys168.

The protein belongs to the thiolase-like superfamily. Chalcone/stilbene synthases family.

It carries out the reaction (E)-4-coumaroyl-CoA + 3 malonyl-CoA + 3 H(+) = 2',4,4',6'-tetrahydroxychalcone + 3 CO2 + 4 CoA. Its pathway is secondary metabolite biosynthesis; flavonoid biosynthesis. Its function is as follows. The primary product of this enzyme is 4,2',4',6'-tetrahydroxychalcone (also termed naringenin-chalcone or chalcone) which can under specific conditions spontaneously isomerize into naringenin. This chain is Chalcone synthase 3 (CHS3), found in Sorghum bicolor (Sorghum).